The chain runs to 1005 residues: Probable beta-galactosidase A (1005 aa).

An N-terminal signal peptide occupies residues 1-18 (MKLLSVAAVALLAAQAAG). The substrate site is built by tyrosine 96, asparagine 140, alanine 141, and glutamate 142. Asparagine 156 carries an N-linked (GlcNAc...) asparagine glycan. A substrate-binding site is contributed by asparagine 199. Catalysis depends on glutamate 200, which acts as the Proton donor. Residues cysteine 205 and cysteine 206 are joined by a disulfide bond. Residue tyrosine 260 coordinates substrate. Cysteine 266 and cysteine 315 are disulfide-bonded. Glutamate 298 acts as the Nucleophile in catalysis. Position 364 (tyrosine 364) interacts with substrate. Residues asparagine 373, asparagine 402, asparagine 453, asparagine 478, asparagine 522, asparagine 622, asparagine 760, asparagine 777, asparagine 805, and asparagine 914 are each glycosylated (N-linked (GlcNAc...) asparagine).

This sequence belongs to the glycosyl hydrolase 35 family.

The protein resides in the secreted. It carries out the reaction Hydrolysis of terminal non-reducing beta-D-galactose residues in beta-D-galactosides.. Its function is as follows. Cleaves beta-linked terminal galactosyl residues from gangliosides, glycoproteins, and glycosaminoglycans. This is Probable beta-galactosidase A (lacA) from Aspergillus flavus (strain ATCC 200026 / FGSC A1120 / IAM 13836 / NRRL 3357 / JCM 12722 / SRRC 167).